The sequence spans 232 residues: Sugar fermentation stimulation protein homolog (232 aa).

This sequence belongs to the SfsA family.

This Acidithiobacillus ferrooxidans (strain ATCC 23270 / DSM 14882 / CIP 104768 / NCIMB 8455) (Ferrobacillus ferrooxidans (strain ATCC 23270)) protein is Sugar fermentation stimulation protein homolog.